A 426-amino-acid chain; its full sequence is Serine--tRNA ligase (426 aa).

231–233 (TSE) provides a ligand contact to L-serine. Position 262–264 (262–264 (RSE)) interacts with ATP. Glu-285 provides a ligand contact to L-serine. Residue 349-352 (EISS) participates in ATP binding. An L-serine-binding site is contributed by Ser-385.

It belongs to the class-II aminoacyl-tRNA synthetase family. Type-1 seryl-tRNA synthetase subfamily. As to quaternary structure, homodimer. The tRNA molecule binds across the dimer.

The protein localises to the cytoplasm. It carries out the reaction tRNA(Ser) + L-serine + ATP = L-seryl-tRNA(Ser) + AMP + diphosphate + H(+). The catalysed reaction is tRNA(Sec) + L-serine + ATP = L-seryl-tRNA(Sec) + AMP + diphosphate + H(+). The protein operates within aminoacyl-tRNA biosynthesis; selenocysteinyl-tRNA(Sec) biosynthesis; L-seryl-tRNA(Sec) from L-serine and tRNA(Sec): step 1/1. Functionally, catalyzes the attachment of serine to tRNA(Ser). Is also able to aminoacylate tRNA(Sec) with serine, to form the misacylated tRNA L-seryl-tRNA(Sec), which will be further converted into selenocysteinyl-tRNA(Sec). This chain is Serine--tRNA ligase, found in Legionella pneumophila (strain Corby).